A 320-amino-acid chain; its full sequence is Pyrroline-5-carboxylate reductase (320 aa).

Belongs to the pyrroline-5-carboxylate reductase family.

It catalyses the reaction L-proline + NADP(+) = (S)-1-pyrroline-5-carboxylate + NADPH + 2 H(+). It carries out the reaction L-proline + NAD(+) = (S)-1-pyrroline-5-carboxylate + NADH + 2 H(+). It functions in the pathway amino-acid biosynthesis; L-proline biosynthesis; L-proline from L-glutamate 5-semialdehyde: step 1/1. This chain is Pyrroline-5-carboxylate reductase (P5CR), found in Lophium arboricola (Zalerion arboricola).